The chain runs to 74 residues: MIAQSTRLAAAVSSSAASAGVSRIAASAMASTIFKRSPGNSFNSFKEYRENAKTYGPLSASLATRRHLAHAPKL.

The helical transmembrane segment at 8 to 30 threads the bilayer; that stretch reads LAAAVSSSAASAGVSRIAASAMA.

The protein localises to the mitochondrion outer membrane. This is an uncharacterized protein from Saccharomyces cerevisiae (strain ATCC 204508 / S288c) (Baker's yeast).